The sequence spans 121 residues: Small ribosomal subunit protein uS13 (121 aa).

Positions 90 to 121 (RHRHGLPVRGQHTKNNARTRKGKAVAIAGKKK) are disordered.

The protein belongs to the universal ribosomal protein uS13 family. Part of the 30S ribosomal subunit. Forms a loose heterodimer with protein S19. Forms two bridges to the 50S subunit in the 70S ribosome.

In terms of biological role, located at the top of the head of the 30S subunit, it contacts several helices of the 16S rRNA. In the 70S ribosome it contacts the 23S rRNA (bridge B1a) and protein L5 of the 50S subunit (bridge B1b), connecting the 2 subunits; these bridges are implicated in subunit movement. Contacts the tRNAs in the A and P-sites. This Limosilactobacillus fermentum (strain NBRC 3956 / LMG 18251) (Lactobacillus fermentum) protein is Small ribosomal subunit protein uS13.